The following is a 185-amino-acid chain: Guanylate kinase (185 aa).

The region spanning 3 to 181 (TRMIIVAAPS…SYGEFKKIVE (179 aa)) is the Guanylate kinase-like domain. 10–17 (APSGAGKS) is a binding site for ATP.

It belongs to the guanylate kinase family.

It is found in the cytoplasm. It catalyses the reaction GMP + ATP = GDP + ADP. Functionally, essential for recycling GMP and indirectly, cGMP. The protein is Guanylate kinase of Bdellovibrio bacteriovorus (strain ATCC 15356 / DSM 50701 / NCIMB 9529 / HD100).